The primary structure comprises 381 residues: E3 ubiquitin-protein ligase RNF133 (381 aa).

The PA domain maps to 65-167 (SSILKRVAGV…VKGMEILHLI (103 aa)). A helical transmembrane segment spans residues 186–208 (WLNHYFVSFMIVTTATLAYFTFY). The RING-type; atypical zinc-finger motif lies at 256–297 (CVICFEAYKPNEIVRILTCKHFFHKNCIDPWILAHGTCPMCK). The tract at residues 340-381 (LPPARTSSKVTHVQEHPTSVNVGSQPPEAEETGHPSFGQHDL) is disordered. Positions 344-363 (RTSSKVTHVQEHPTSVNVGS) are enriched in polar residues.

Interacts with E3 ligase UBE2J1. In terms of processing, auto-ubiquitinated.

The protein resides in the endoplasmic reticulum membrane. The catalysed reaction is S-ubiquitinyl-[E2 ubiquitin-conjugating enzyme]-L-cysteine + [acceptor protein]-L-lysine = [E2 ubiquitin-conjugating enzyme]-L-cysteine + N(6)-ubiquitinyl-[acceptor protein]-L-lysine.. It functions in the pathway protein modification; protein ubiquitination. Functionally, has E3 ubiquitin-protein ligase activity. Plays a role in male fecundity through the interaction with the E2 ubituitin-protein ligase UBE2J1. This is E3 ubiquitin-protein ligase RNF133 (Rnf133) from Rattus norvegicus (Rat).